The sequence spans 90 residues: Conotoxin TxMMSK-06 (90 aa).

The signal sequence occupies residues 1-22 (MMSKLGVLLTICLLLFPHTAVP). A propeptide spanning residues 23–74 (LDGDQHADQPAERLQDDISSEHHPMLNSIRRREQNQFMSFTSVKLRDSRGER) is cleaved from the precursor. Residues 24–43 (DGDQHADQPAERLQDDISSE) are disordered. Basic and acidic residues predominate over residues 25–43 (GDQHADQPAERLQDDISSE). 3 cysteine pairs are disulfide-bonded: C75/C89, C76/C85, and C81/C88. The residue at position 87 (P87) is a 4-hydroxyproline. C89 carries the cysteine amide modification.

It belongs to the conotoxin M superfamily. As to expression, expressed by the venom duct.

Its subcellular location is the secreted. The protein is Conotoxin TxMMSK-06 of Conus textile (Cloth-of-gold cone).